A 137-amino-acid chain; its full sequence is Small ribosomal subunit protein uS12 (137 aa).

Disordered regions lie at residues 1–21 (MPTI…KSDS) and 36–57 (TKLS…TPKK). Residue D102 is modified to 3-methylthioaspartic acid.

The protein belongs to the universal ribosomal protein uS12 family. Part of the 30S ribosomal subunit. Contacts proteins S8 and S17. May interact with IF1 in the 30S initiation complex.

With S4 and S5 plays an important role in translational accuracy. In terms of biological role, interacts with and stabilizes bases of the 16S rRNA that are involved in tRNA selection in the A site and with the mRNA backbone. Located at the interface of the 30S and 50S subunits, it traverses the body of the 30S subunit contacting proteins on the other side and probably holding the rRNA structure together. The combined cluster of proteins S8, S12 and S17 appears to hold together the shoulder and platform of the 30S subunit. The chain is Small ribosomal subunit protein uS12 from Streptococcus agalactiae serotype Ia (strain ATCC 27591 / A909 / CDC SS700).